The sequence spans 370 residues: tRNA-specific 2-thiouridylase MnmA (370 aa).

Residues 7-14 (GISGGVDS) and methionine 33 each bind ATP. Residues 104-106 (NPD) are interaction with target base in tRNA. Cysteine 109 functions as the Nucleophile in the catalytic mechanism. An intrachain disulfide couples cysteine 109 to cysteine 208. Glycine 134 is a binding site for ATP. The segment at 158–160 (KDQ) is interaction with tRNA. Cysteine 208 acts as the Cysteine persulfide intermediate in catalysis.

It belongs to the MnmA/TRMU family.

It is found in the cytoplasm. It catalyses the reaction S-sulfanyl-L-cysteinyl-[protein] + uridine(34) in tRNA + AH2 + ATP = 2-thiouridine(34) in tRNA + L-cysteinyl-[protein] + A + AMP + diphosphate + H(+). Catalyzes the 2-thiolation of uridine at the wobble position (U34) of tRNA, leading to the formation of s(2)U34. The chain is tRNA-specific 2-thiouridylase MnmA from Malacoplasma penetrans (strain HF-2) (Mycoplasma penetrans).